Reading from the N-terminus, the 242-residue chain is MEGWQRAFVLHSRPWSETSLMLDVFTEESGRVRLVAKGARSKRSTLKGALQPFTPLLLRFGGRGEVKTLRSAEAVSLALPLSGITLYSGLYINELLSRVLEYETRFSELFFDYLHCIQSLAGATGTPEPALRRFELALLGHLGYGVNFTYCAGSGEPVDDTMTYRYREEKGFIASVVIDNKTFTGRQLKALNAREFPDADTLRAAKRFTRMALKPYLGGKPLKSRELFRQFMPKRTVKTHYE.

The protein belongs to the RecO family. In terms of assembly, monomer.

Functionally, involved in DNA repair and RecF pathway recombination. The polypeptide is DNA repair protein RecO (Shigella boydii serotype 18 (strain CDC 3083-94 / BS512)).